Consider the following 1824-residue polypeptide: Treslin (1824 aa).

Disordered regions lie at residues 542–572 (EFYQ…QKMK), 590–622 (AQKT…KPGL), 907–973 (SPSK…SGES), 1001–1035 (RHSS…KGKF), 1098–1117 (AVGC…VGDN), 1189–1221 (VPEN…SPEE), 1293–1388 (PFCN…DDDK), 1459–1518 (FEGK…QSSP), 1617–1650 (TPTH…NLNS), and 1803–1824 (PLCQ…KLLD). Residues 546–555 (SSTAGSSGSL) are compositionally biased toward low complexity. Positions 562–572 (TQCTPVRQKMK) are enriched in polar residues. The span at 605–619 (GTEKGGKKSSGDRTK) shows a compositional bias: basic and acidic residues. The segment covering 907–921 (SPSKKSKMPRSQSVS) has biased composition (polar residues). Basic and acidic residues predominate over residues 932–952 (SDVDNDDRHTLLTKKVSETPL). 2 stretches are compositionally biased toward polar residues: residues 1005 to 1014 (VFYSSSQPRS) and 1103 to 1114 (TPQSPRTPNRTV). The span at 1319–1345 (RSGNTPVKESCSPSSNSQGITGTSPSP) shows a compositional bias: polar residues. Residues 1347–1370 (KSLSSAVAKSSPSPSFGPSRSGVG) are compositionally biased toward low complexity. The segment covering 1462-1472 (KQTTSTGTPLT) has biased composition (polar residues). The segment covering 1480–1490 (TPDRRQREAEA) has biased composition (basic and acidic residues). 2 stretches are compositionally biased toward polar residues: residues 1617–1629 (TPTH…QSPL) and 1636–1650 (SPQS…NLNS). Over residues 1807-1824 (PRRRRTPSRTYSRKKLLD) the composition is skewed to basic residues.

This sequence belongs to the treslin family. As to quaternary structure, interacts with topbp1 (via BRCT domains); interaction takes place in a cdk2-dependent manner. Component of the replisome complex.

Its subcellular location is the nucleus. Functionally, regulator of DNA replication and S/M and G2/M checkpoints. Regulates the triggering of DNA replication initiation via its interaction with topbp1 by participating in cdk2-mediated loading of cdc45l onto replication origins. Required for the transition from pre-replication complex (pre-RC) to pre-initiation complex (pre-IC). Required to prevent mitotic entry after treatment with ionizing radiation. The polypeptide is Treslin (ticrr) (Danio rerio (Zebrafish)).